We begin with the raw amino-acid sequence, 415 residues long: Carbamoyl phosphate synthase arginine-specific small chain (415 aa).

A mitochondrion-targeting transit peptide spans 1–17 (MLRFLKPFPLRFGKRFY). L-glutamine contacts are provided by S88, G272, and G274. The Glutamine amidotransferase type-1 domain maps to 225 to 412 (NIAVIDCGVK…IKEAIKYQKS (188 aa)). The active-site Nucleophile is the C301. Residues M302, Q305, N343, G345, and Y346 each coordinate L-glutamine. Catalysis depends on residues H385 and E387.

The protein belongs to the CarA family. In terms of assembly, heterodimer composed of 2 chains; the small (or glutamine) chain promotes the hydrolysis of glutamine to ammonia, which is used by the large (or ammonia) chain to synthesize carbamoyl phosphate.

Its subcellular location is the mitochondrion. It localises to the cytoplasm. The enzyme catalyses hydrogencarbonate + L-glutamine + 2 ATP + H2O = carbamoyl phosphate + L-glutamate + 2 ADP + phosphate + 2 H(+). It carries out the reaction L-glutamine + H2O = L-glutamate + NH4(+). It participates in amino-acid biosynthesis; L-arginine biosynthesis; carbamoyl phosphate from bicarbonate: step 1/1. In terms of biological role, small subunit of the arginine-specific carbamoyl phosphate synthase (CPSase). CPSase catalyzes the formation of carbamoyl phosphate from the ammonia moiety of glutamine, carbonate, and phosphate donated by ATP, the first step of the arginine biosynthetic pathway. The small subunit (glutamine amidotransferase) binds and cleaves glutamine to supply the large subunit with the substrate ammonia. The chain is Carbamoyl phosphate synthase arginine-specific small chain (arg5) from Schizosaccharomyces pombe (strain 972 / ATCC 24843) (Fission yeast).